A 597-amino-acid chain; its full sequence is Phragmoplastin interacting protein 1 (597 aa).

Positions 18–136 are disordered; it reads ESLSVSVSET…KTPKKAEEGN (119 aa). The segment covering 20-29 has biased composition (polar residues); that stretch reads LSVSVSETNP. Positions 30-40 are enriched in low complexity; that stretch reads QSQSLKLLLDS. 2 stretches are compositionally biased toward basic residues: residues 43 to 53 and 112 to 129; these read HKPRLSKREKR and QKKK…NKTP. The Nuclear localization signal signature appears at 112 to 119; the sequence is QKKKNKKK. 2 consecutive RRM domains span residues 161-238 and 262-338; these read NKLY…QYVK and NRVY…CALK. 3 CCHC-type zinc fingers span residues 397–411, 481–495, and 576–591; these read CYEC…TACP and CYEC…ACPN.

Interacts with phragmoplastins (e.g. DRP1A, DRP1B, DRP1C, DRP1D and DRP1E) and with GTP-bound ARAC11/ROP1 as well as with Ran2 transcripts.

The protein resides in the nucleus. It is found in the cell membrane. The protein localises to the cytoplasm. It localises to the cytoskeleton. Its subcellular location is the phragmoplast. Functionally, RNA-binding protein which mediates polarized mRNA (e.g. Ran2 transcripts mRNA) transport from the nucleus to the vicinity of the cell plate during cytokinesis and phragmoplast formation. This chain is Phragmoplastin interacting protein 1, found in Arabidopsis thaliana (Mouse-ear cress).